The chain runs to 242 residues: Probable transcriptional regulatory protein NGK_1508 (242 aa).

It belongs to the TACO1 family.

It localises to the cytoplasm. The polypeptide is Probable transcriptional regulatory protein NGK_1508 (Neisseria gonorrhoeae (strain NCCP11945)).